A 108-amino-acid polypeptide reads, in one-letter code: ATP-dependent Clp protease adapter protein ClpS (108 aa).

It belongs to the ClpS family. As to quaternary structure, binds to the N-terminal domain of the chaperone ClpA.

Functionally, involved in the modulation of the specificity of the ClpAP-mediated ATP-dependent protein degradation. This is ATP-dependent Clp protease adapter protein ClpS from Ralstonia pickettii (strain 12J).